Reading from the N-terminus, the 355-residue chain is UDP-N-acetylglucosamine--N-acetylmuramyl-(pentapeptide) pyrophosphoryl-undecaprenol N-acetylglucosamine transferase (355 aa).

UDP-N-acetyl-alpha-D-glucosamine is bound by residues 14–16 (SGG), asparagine 126, arginine 162, serine 190, isoleucine 243, 262–267 (ALTVSE), and glutamine 288.

This sequence belongs to the glycosyltransferase 28 family. MurG subfamily.

It is found in the cell inner membrane. The catalysed reaction is di-trans,octa-cis-undecaprenyl diphospho-N-acetyl-alpha-D-muramoyl-L-alanyl-D-glutamyl-meso-2,6-diaminopimeloyl-D-alanyl-D-alanine + UDP-N-acetyl-alpha-D-glucosamine = di-trans,octa-cis-undecaprenyl diphospho-[N-acetyl-alpha-D-glucosaminyl-(1-&gt;4)]-N-acetyl-alpha-D-muramoyl-L-alanyl-D-glutamyl-meso-2,6-diaminopimeloyl-D-alanyl-D-alanine + UDP + H(+). Its pathway is cell wall biogenesis; peptidoglycan biosynthesis. In terms of biological role, cell wall formation. Catalyzes the transfer of a GlcNAc subunit on undecaprenyl-pyrophosphoryl-MurNAc-pentapeptide (lipid intermediate I) to form undecaprenyl-pyrophosphoryl-MurNAc-(pentapeptide)GlcNAc (lipid intermediate II). This is UDP-N-acetylglucosamine--N-acetylmuramyl-(pentapeptide) pyrophosphoryl-undecaprenol N-acetylglucosamine transferase from Blochmanniella pennsylvanica (strain BPEN).